The following is a 148-amino-acid chain: UPF0756 membrane protein YeaL (148 aa).

Transmembrane regions (helical) follow at residues 14-34, 51-71, 86-106, and 121-141; these read ALGF…LIIV, LSIG…SGTL, LVAI…VTLM, and VLGV…AGLV.

It belongs to the UPF0756 family.

It is found in the cell membrane. The polypeptide is UPF0756 membrane protein YeaL (Shigella dysenteriae serotype 1 (strain Sd197)).